The chain runs to 56 residues: Preprotein translocase subunit SecG (56 aa).

The Cytoplasmic segment spans residues 1-29 (MAKEKATLPPTGAGLMRFFDEDTKAVKIS). The chain crosses the membrane as a helical span at residues 30–51 (PRGVIALTLILVALEILLHAFG). At 52-56 (PQIFG) the chain is on the extracellular side.

It belongs to the SEC61-beta family. In terms of assembly, component of the protein translocase complex. Heterotrimer consisting of alpha (SecY), beta (SecG) and gamma (SecE) subunits. Can form oligomers of the heterotrimer.

It localises to the cell membrane. Functionally, involved in protein export. The function of the beta subunit is unknown, but it may be involved in stabilization of the trimeric complex. The sequence is that of Preprotein translocase subunit SecG from Thermococcus onnurineus (strain NA1).